We begin with the raw amino-acid sequence, 427 residues long: MLDIQQLRSNLDAVAEGLAKRGKPIDFSEFSALEAERKTLQTRTQDLQAQRNSLSKQIGMLKGKGEDASEVMAQVGSIGDELKASEARLAELLTQFNAILAALPNIPDDSVPVGSDETGNVEIKRWGTPRVFDFEVKDHTDVGEALGQLDFGTAAKISGARFSLLKGGLARLHRALAQFMLDTHTAEHGYTELYAPYLVNAASLYGTGQLPKFEEDLFKVLRGDQDPLYLIPTAEVPVTNIVRDEILSAEALPLKFVCHTPCFRSEAGSGGRDVRGMIRQHQFDKVELVQVVHPEKSAEAHEELTRQAEIILEKLELPYRRMALCSGDMGFSAAKTYDLEVWLPAQNTYREISSCSNFGAFQARRMQARFRNDKNKTELCHTLNGSGLAVGRTLVAILENNQNADGSVTIPAVLRPYMGGLEVLSAA.

An L-serine-binding site is contributed by 233–235 (TAE). 264-266 (RSE) contributes to the ATP binding site. Glutamate 287 is a binding site for L-serine. 351–354 (EISS) is a binding site for ATP. An L-serine-binding site is contributed by serine 386.

This sequence belongs to the class-II aminoacyl-tRNA synthetase family. Type-1 seryl-tRNA synthetase subfamily. In terms of assembly, homodimer. The tRNA molecule binds across the dimer.

The protein localises to the cytoplasm. The catalysed reaction is tRNA(Ser) + L-serine + ATP = L-seryl-tRNA(Ser) + AMP + diphosphate + H(+). It carries out the reaction tRNA(Sec) + L-serine + ATP = L-seryl-tRNA(Sec) + AMP + diphosphate + H(+). It functions in the pathway aminoacyl-tRNA biosynthesis; selenocysteinyl-tRNA(Sec) biosynthesis; L-seryl-tRNA(Sec) from L-serine and tRNA(Sec): step 1/1. Its function is as follows. Catalyzes the attachment of serine to tRNA(Ser). Is also able to aminoacylate tRNA(Sec) with serine, to form the misacylated tRNA L-seryl-tRNA(Sec), which will be further converted into selenocysteinyl-tRNA(Sec). The protein is Serine--tRNA ligase of Dechloromonas aromatica (strain RCB).